The sequence spans 181 residues: ATP-dependent protease subunit HslV (181 aa).

The active site involves Thr5. Na(+)-binding residues include Ala161, Cys164, and Thr167.

It belongs to the peptidase T1B family. HslV subfamily. In terms of assembly, a double ring-shaped homohexamer of HslV is capped on each side by a ring-shaped HslU homohexamer. The assembly of the HslU/HslV complex is dependent on binding of ATP.

The protein localises to the cytoplasm. The enzyme catalyses ATP-dependent cleavage of peptide bonds with broad specificity.. With respect to regulation, allosterically activated by HslU binding. Functionally, protease subunit of a proteasome-like degradation complex believed to be a general protein degrading machinery. The polypeptide is ATP-dependent protease subunit HslV (Sulfurimonas denitrificans (strain ATCC 33889 / DSM 1251) (Thiomicrospira denitrificans (strain ATCC 33889 / DSM 1251))).